We begin with the raw amino-acid sequence, 474 residues long: Bifunctional protein HldE (474 aa).

Residues 1-318 form a ribokinase region; sequence MKLSMPRFDQ…RAIQREEGSE (318 aa). Position 194–197 (194–197) interacts with ATP; the sequence is NLSE. Asp263 is a catalytic residue. The tract at residues 343 to 474 is cytidylyltransferase; sequence FTNGCFDILH…AIVEKIRGQG (132 aa).

In the N-terminal section; belongs to the carbohydrate kinase PfkB family. This sequence in the C-terminal section; belongs to the cytidylyltransferase family. In terms of assembly, homodimer.

The enzyme catalyses D-glycero-beta-D-manno-heptose 7-phosphate + ATP = D-glycero-beta-D-manno-heptose 1,7-bisphosphate + ADP + H(+). It carries out the reaction D-glycero-beta-D-manno-heptose 1-phosphate + ATP + H(+) = ADP-D-glycero-beta-D-manno-heptose + diphosphate. The protein operates within nucleotide-sugar biosynthesis; ADP-L-glycero-beta-D-manno-heptose biosynthesis; ADP-L-glycero-beta-D-manno-heptose from D-glycero-beta-D-manno-heptose 7-phosphate: step 1/4. It functions in the pathway nucleotide-sugar biosynthesis; ADP-L-glycero-beta-D-manno-heptose biosynthesis; ADP-L-glycero-beta-D-manno-heptose from D-glycero-beta-D-manno-heptose 7-phosphate: step 3/4. In terms of biological role, catalyzes the phosphorylation of D-glycero-D-manno-heptose 7-phosphate at the C-1 position to selectively form D-glycero-beta-D-manno-heptose-1,7-bisphosphate. Its function is as follows. Catalyzes the ADP transfer from ATP to D-glycero-beta-D-manno-heptose 1-phosphate, yielding ADP-D-glycero-beta-D-manno-heptose. This chain is Bifunctional protein HldE, found in Pseudomonas syringae pv. syringae (strain B728a).